Reading from the N-terminus, the 297-residue chain is 4-hydroxy-tetrahydrodipicolinate synthase (297 aa).

A pyruvate-binding site is contributed by Thr-46. Tyr-134 serves as the catalytic Proton donor/acceptor. Lys-162 functions as the Schiff-base intermediate with substrate in the catalytic mechanism. Pyruvate is bound at residue Ile-204.

The protein belongs to the DapA family. As to quaternary structure, homotetramer; dimer of dimers.

It localises to the cytoplasm. It catalyses the reaction L-aspartate 4-semialdehyde + pyruvate = (2S,4S)-4-hydroxy-2,3,4,5-tetrahydrodipicolinate + H2O + H(+). The protein operates within amino-acid biosynthesis; L-lysine biosynthesis via DAP pathway; (S)-tetrahydrodipicolinate from L-aspartate: step 3/4. In terms of biological role, catalyzes the condensation of (S)-aspartate-beta-semialdehyde [(S)-ASA] and pyruvate to 4-hydroxy-tetrahydrodipicolinate (HTPA). This Stenotrophomonas maltophilia (strain K279a) protein is 4-hydroxy-tetrahydrodipicolinate synthase.